The sequence spans 305 residues: uncharacterized protein (305 aa).

Helical transmembrane passes span 4-24 (LNIYIMLLGFSIFTGATFNLA), 38-58 (AWRFGLAAAVMLIILIFTEGI), 67-87 (AVSYIVLGIIGIFGFNALFFV), 95-115 (VNGALIMGLNPLLTAILARII), 125-145 (VLGIFFAFIGVLLVITQGSIE), 152-172 (ISGGDLIIFTGNVCWALYGVL), 183-203 (LSTTTYTMVIGAVSLIVVSLF), 215-235 (IGVWGAIAFMAFFTSVLGYLW), 250-270 (LFFNLVPVVTMIISFAVGTPI), and 272-292 (VFQVIGAVLVILGVLTASGVI). 2 EamA domains span residues 15–140 (IFTG…LVIT) and 164–290 (VCWA…TASG).

The protein belongs to the EamA transporter family.

It is found in the cell membrane. This is an uncharacterized protein from Bacillus subtilis (strain 168).